The following is a 619-amino-acid chain: Chaperone protein HscA homolog (619 aa).

It belongs to the heat shock protein 70 family.

Functionally, chaperone involved in the maturation of iron-sulfur cluster-containing proteins. Has a low intrinsic ATPase activity which is markedly stimulated by HscB. The polypeptide is Chaperone protein HscA homolog (Chromobacterium violaceum (strain ATCC 12472 / DSM 30191 / JCM 1249 / CCUG 213 / NBRC 12614 / NCIMB 9131 / NCTC 9757 / MK)).